Reading from the N-terminus, the 902-residue chain is DNA mismatch repair protein MutS (902 aa).

Residue 647–654 participates in ATP binding; sequence GPNMGGKS.

The protein belongs to the DNA mismatch repair MutS family.

Functionally, this protein is involved in the repair of mismatches in DNA. It is possible that it carries out the mismatch recognition step. This protein has a weak ATPase activity. The polypeptide is DNA mismatch repair protein MutS (Nitrosospira multiformis (strain ATCC 25196 / NCIMB 11849 / C 71)).